A 210-amino-acid chain; its full sequence is 3-hexulose-6-phosphate synthase (210 aa).

The protein belongs to the HPS/KGPDC family. HPS subfamily.

It catalyses the reaction D-ribulose 5-phosphate + formaldehyde = D-arabino-hex-3-ulose 6-phosphate. The protein operates within one-carbon metabolism; formaldehyde assimilation via RuMP pathway; D-fructose 6-phosphate from D-ribulose 5-phosphate and formaldehyde: step 1/2. Its function is as follows. Catalyzes the condensation of ribulose 5-phosphate with formaldehyde to form 3-hexulose 6-phosphate. This is 3-hexulose-6-phosphate synthase from Staphylococcus epidermidis (strain ATCC 35984 / DSM 28319 / BCRC 17069 / CCUG 31568 / BM 3577 / RP62A).